Here is a 267-residue protein sequence, read N- to C-terminus: 4-hydroxy-tetrahydrodipicolinate reductase (267 aa).

Residues 8-13 (GAAGRM) and D34 contribute to the NAD(+) site. An NADP(+)-binding site is contributed by R35. NAD(+) is bound by residues 98-100 (GTT) and 122-125 (AANF). H155 serves as the catalytic Proton donor/acceptor. Residue H156 coordinates (S)-2,3,4,5-tetrahydrodipicolinate. The Proton donor role is filled by K159. 165–166 (GT) contacts (S)-2,3,4,5-tetrahydrodipicolinate.

Belongs to the DapB family.

It is found in the cytoplasm. The enzyme catalyses (S)-2,3,4,5-tetrahydrodipicolinate + NAD(+) + H2O = (2S,4S)-4-hydroxy-2,3,4,5-tetrahydrodipicolinate + NADH + H(+). It carries out the reaction (S)-2,3,4,5-tetrahydrodipicolinate + NADP(+) + H2O = (2S,4S)-4-hydroxy-2,3,4,5-tetrahydrodipicolinate + NADPH + H(+). It functions in the pathway amino-acid biosynthesis; L-lysine biosynthesis via DAP pathway; (S)-tetrahydrodipicolinate from L-aspartate: step 4/4. Its function is as follows. Catalyzes the conversion of 4-hydroxy-tetrahydrodipicolinate (HTPA) to tetrahydrodipicolinate. The chain is 4-hydroxy-tetrahydrodipicolinate reductase from Pseudomonas savastanoi pv. phaseolicola (strain 1448A / Race 6) (Pseudomonas syringae pv. phaseolicola (strain 1448A / Race 6)).